Here is a 542-residue protein sequence, read N- to C-terminus: Chaperonin GroEL 5 (542 aa).

ATP contacts are provided by residues 30-33, lysine 51, 87-91, glycine 415, and aspartate 496; these read TLGP and DGTTT.

The protein belongs to the chaperonin (HSP60) family. In terms of assembly, forms a cylinder of 14 subunits composed of two heptameric rings stacked back-to-back. Interacts with the co-chaperonin GroES.

The protein localises to the cytoplasm. The catalysed reaction is ATP + H2O + a folded polypeptide = ADP + phosphate + an unfolded polypeptide.. Its function is as follows. Together with its co-chaperonin GroES, plays an essential role in assisting protein folding. The GroEL-GroES system forms a nano-cage that allows encapsulation of the non-native substrate proteins and provides a physical environment optimized to promote and accelerate protein folding. The protein is Chaperonin GroEL 5 of Rhizobium meliloti (strain 1021) (Ensifer meliloti).